A 412-amino-acid chain; its full sequence is Peptidase T (412 aa).

H79 provides a ligand contact to Zn(2+). The active site involves D81. D142 lines the Zn(2+) pocket. E176 acts as the Proton acceptor in catalysis. Zn(2+) is bound by residues E177, D199, and H381.

Belongs to the peptidase M20B family. The cofactor is Zn(2+).

It localises to the cytoplasm. The enzyme catalyses Release of the N-terminal residue from a tripeptide.. In terms of biological role, cleaves the N-terminal amino acid of tripeptides. This Exiguobacterium sp. (strain ATCC BAA-1283 / AT1b) protein is Peptidase T.